The primary structure comprises 169 residues: Lipoprotein signal peptidase (169 aa).

The next 2 helical transmembrane spans lie at 59–79 and 84–104; these read PTVL…YVIW and TTLF…NMID. Catalysis depends on residues D113 and D139. Residues 132-152 traverse the membrane as a helical segment; sequence WPIFNIADSAITIGACMLMIF.

It belongs to the peptidase A8 family.

Its subcellular location is the cell inner membrane. It catalyses the reaction Release of signal peptides from bacterial membrane prolipoproteins. Hydrolyzes -Xaa-Yaa-Zaa-|-(S,diacylglyceryl)Cys-, in which Xaa is hydrophobic (preferably Leu), and Yaa (Ala or Ser) and Zaa (Gly or Ala) have small, neutral side chains.. It functions in the pathway protein modification; lipoprotein biosynthesis (signal peptide cleavage). Functionally, this protein specifically catalyzes the removal of signal peptides from prolipoproteins. This chain is Lipoprotein signal peptidase, found in Pelodictyon phaeoclathratiforme (strain DSM 5477 / BU-1).